Here is a 513-residue protein sequence, read N- to C-terminus: GMP synthase [glutamine-hydrolyzing] (513 aa).

Residues 3-200 (SVTVLDFGSQ…LIDIAGIKPD (198 aa)) form the Glutamine amidotransferase type-1 domain. The Nucleophile role is filled by C80. Catalysis depends on residues H174 and E176. The GMPS ATP-PPase domain occupies 201-388 (WSPKSFIGHQ…LGIAEDILMR (188 aa)). 228–234 (SGGVDST) contacts ATP.

As to quaternary structure, homodimer.

The catalysed reaction is XMP + L-glutamine + ATP + H2O = GMP + L-glutamate + AMP + diphosphate + 2 H(+). The protein operates within purine metabolism; GMP biosynthesis; GMP from XMP (L-Gln route): step 1/1. In terms of biological role, catalyzes the synthesis of GMP from XMP. In Chlorobium phaeobacteroides (strain DSM 266 / SMG 266 / 2430), this protein is GMP synthase [glutamine-hydrolyzing].